The chain runs to 264 residues: uncharacterized protein (264 aa).

A helical transmembrane segment spans residues 7–27; that stretch reads LTLGICLVLLIILIVGYVIMT.

This sequence belongs to the staphylococcal tandem lipoprotein family.

The protein localises to the cell membrane. This is an uncharacterized protein from Staphylococcus aureus (strain NCTC 8325 / PS 47).